The primary structure comprises 139 residues: Putative pre-16S rRNA nuclease (139 aa).

Belongs to the YqgF nuclease family.

It localises to the cytoplasm. Its function is as follows. Could be a nuclease involved in processing of the 5'-end of pre-16S rRNA. The polypeptide is Putative pre-16S rRNA nuclease (Streptococcus thermophilus (strain CNRZ 1066)).